A 76-amino-acid chain; its full sequence is Small ribosomal subunit protein bS18 (76 aa).

Belongs to the bacterial ribosomal protein bS18 family. In terms of assembly, part of the 30S ribosomal subunit. Forms a tight heterodimer with protein bS6.

Its function is as follows. Binds as a heterodimer with protein bS6 to the central domain of the 16S rRNA, where it helps stabilize the platform of the 30S subunit. The chain is Small ribosomal subunit protein bS18 from Xanthomonas campestris pv. campestris (strain 8004).